The following is a 1232-amino-acid chain: DNA-directed RNA polymerase subunit beta (1232 aa).

Residues S1170 to H1232 form a disordered region. Over residues V1171–V1180 the composition is skewed to acidic residues. Positions P1189–E1198 are enriched in basic and acidic residues. Residues D1199–H1232 show a composition bias toward acidic residues.

It belongs to the RNA polymerase beta chain family. As to quaternary structure, the RNAP catalytic core consists of 2 alpha, 1 beta, 1 beta' and 1 omega subunit. When a sigma factor is associated with the core the holoenzyme is formed, which can initiate transcription.

The catalysed reaction is RNA(n) + a ribonucleoside 5'-triphosphate = RNA(n+1) + diphosphate. In terms of biological role, DNA-dependent RNA polymerase catalyzes the transcription of DNA into RNA using the four ribonucleoside triphosphates as substrates. The protein is DNA-directed RNA polymerase subunit beta of Clostridium botulinum (strain Hall / ATCC 3502 / NCTC 13319 / Type A).